The chain runs to 621 residues: MSFDTAKYPTLALVETPDELRLLPKESLPKLCDELRQYLLDSVSRSSGHFASGLGTVELTVALHYVYNTPFDHLVWDVGHQAYPHKILTGRRDRISTIRQKGGLHPFPWRDESEYDVLSVGHSSTSISAGLGMAVAAEREGKGRRTVCVIGDGAITAGMAFEAMNHAGDIKSDLLVVLNDNEMSISENVGALNNHLAQLLSGKLYASLREGGKKVLSGLPPIKELVKRTEEHLKGMVVPGTLFEELGFNYIGPVDGHDVQALSHTLKNMRSLKGPQLLHIMTKKGKGYAPAEQDPISWHAVPKFDPASGTLPKSKEGAQPTYSKIFGQWLQETAAKDSKLMAITPAMREGSGMLQFSRDYPQQYFDVAIAEQHAVTFAAGLAVGGYHPIVAIYSTFLQRAYDQVIHDVAIQSLPVLFAIDRGGIVGADGQTHQGAFDLSFLRCIPNMIIMTPSDENECRQMLHTGYHYQKGPTAVRYPRGNGTGTELTPLSELPIGKGVVRRQGKTVAILNFGTLLPEAQAVAEKLNATLVDMRFVKPLDEALLEELAQSHSTFVTLEENAVMGGAGSGVNEFLMAKRLAVSVLNIGLPDVFIPQGSQEEIRVDLGLDAAGIERRITQWME.

Thiamine diphosphate contacts are provided by residues His80 and Gly121–Ser123. Residue Asp152 coordinates Mg(2+). Residues Gly153–Ala154, Asn181, Tyr288, and Glu371 each bind thiamine diphosphate. Mg(2+) is bound at residue Asn181.

Belongs to the transketolase family. DXPS subfamily. As to quaternary structure, homodimer. Requires Mg(2+) as cofactor. Thiamine diphosphate serves as cofactor.

The enzyme catalyses D-glyceraldehyde 3-phosphate + pyruvate + H(+) = 1-deoxy-D-xylulose 5-phosphate + CO2. It participates in metabolic intermediate biosynthesis; 1-deoxy-D-xylulose 5-phosphate biosynthesis; 1-deoxy-D-xylulose 5-phosphate from D-glyceraldehyde 3-phosphate and pyruvate: step 1/1. Functionally, catalyzes the acyloin condensation reaction between C atoms 2 and 3 of pyruvate and glyceraldehyde 3-phosphate to yield 1-deoxy-D-xylulose-5-phosphate (DXP). This is 1-deoxy-D-xylulose-5-phosphate synthase from Pectobacterium atrosepticum (strain SCRI 1043 / ATCC BAA-672) (Erwinia carotovora subsp. atroseptica).